Reading from the N-terminus, the 389-residue chain is Phospho-N-acetylmuramoyl-pentapeptide-transferase (389 aa).

10 helical membrane-spanning segments follow: residues Arg-25–Ile-45, Met-74–Gly-94, Phe-97–Tyr-117, Phe-134–Glu-154, Val-190–Ser-210, Gly-222–Met-242, Ala-259–Phe-279, Val-286–Ile-306, Ile-311–Val-331, and Gln-366–Leu-386.

It belongs to the glycosyltransferase 4 family. MraY subfamily. Mg(2+) is required as a cofactor.

The protein resides in the cell inner membrane. The enzyme catalyses UDP-N-acetyl-alpha-D-muramoyl-L-alanyl-gamma-D-glutamyl-meso-2,6-diaminopimeloyl-D-alanyl-D-alanine + di-trans,octa-cis-undecaprenyl phosphate = di-trans,octa-cis-undecaprenyl diphospho-N-acetyl-alpha-D-muramoyl-L-alanyl-D-glutamyl-meso-2,6-diaminopimeloyl-D-alanyl-D-alanine + UMP. It participates in cell wall biogenesis; peptidoglycan biosynthesis. Functionally, catalyzes the initial step of the lipid cycle reactions in the biosynthesis of the cell wall peptidoglycan: transfers peptidoglycan precursor phospho-MurNAc-pentapeptide from UDP-MurNAc-pentapeptide onto the lipid carrier undecaprenyl phosphate, yielding undecaprenyl-pyrophosphoryl-MurNAc-pentapeptide, known as lipid I. The protein is Phospho-N-acetylmuramoyl-pentapeptide-transferase of Cupriavidus pinatubonensis (strain JMP 134 / LMG 1197) (Cupriavidus necator (strain JMP 134)).